The sequence spans 513 residues: MEKFEGYSEKQKSRQQYFVYPLLFQEYIYAFAHDYGLNGAEPVEIFGCNNKKFSSLLVKRLIIRMYQQNFWINSVNQPNQDRLLDHSNYFYLEFYSQILSEGFAIVVEIPLSLGQPSCSEEKEIPKFQNLQSIHSIFPFLEDKFLHLHYLSHIEIPYPIHLEILVQLLEYRIQDVPSLHLLRFFLNYYSNWNSLITSMKSYFLFKKENKRLFRFLYNSYVSEYEFFLLFLRKQSSCLRLTSSGTFLERVHFSGKMEHFWVMYPGFFRKTIWFFMDPLIHYVRYQGKAILASKGTLLLKKKWKSYLVNFSQYFLSFWTQPQRIRLNQLTNSCFDFLGYLPSVPINTLLVRNQMLENSFLIDTRMKKFDTTVPATSLVGSLSKAQFCTGSGHPISKPVWTDLSDWDILDRFGRICRNLFHYHSGSSKKRILYRLKYILRLSCARTLARKHKSTVRTFMQRLGSVFLEEFFTEEEQVFCLMFTKTTRFSFNGSHSERIWYLDIIRINDLVNPLTLN.

Belongs to the intron maturase 2 family. MatK subfamily.

Its subcellular location is the plastid. It localises to the chloroplast. Its function is as follows. Usually encoded in the trnK tRNA gene intron. Probably assists in splicing its own and other chloroplast group II introns. This chain is Maturase K, found in Panicum capillare (Witchgrass).